Here is a 131-residue protein sequence, read N- to C-terminus: Protein NrdI (131 aa).

The protein belongs to the NrdI family.

In terms of biological role, probably involved in ribonucleotide reductase function. In Bacillus licheniformis (strain ATCC 14580 / DSM 13 / JCM 2505 / CCUG 7422 / NBRC 12200 / NCIMB 9375 / NCTC 10341 / NRRL NRS-1264 / Gibson 46), this protein is Protein NrdI.